A 496-amino-acid chain; its full sequence is Pituitary adenylate cyclase-activating polypeptide type I receptor (496 aa).

The signal sequence occupies residues 1–20; the sequence is MARTLQLSLTALLLLPMAIA. At 21 to 152 the chain is on the extracellular side; sequence MHSDCIFKKE…SGDQDYYYLS (132 aa). 3 disulfides stabilise this stretch: Cys-34/Cys-63, Cys-54/Cys-118, and Cys-77/Cys-134. N-linked (GlcNAc...) asparagine glycans are attached at residues Asn-48, Asn-60, and Asn-117. Residues 125-139 form an important for ADCYAP1/PACAP ligand binding and specificity region; that stretch reads EPFPHYFDACGFDDY. Residues 125 to 139 form an important for ligand binding and specificity region; sequence EPFPHYFDACGFDDY. The helical transmembrane segment at 153-177 threads the bilayer; sequence VKALYTVGYSTSLVTLTTAMVILCR. Residues 178–187 are Cytoplasmic-facing; sequence FRKLHCTRNF. A helical transmembrane segment spans residues 188-208; the sequence is IHMNLFVSFMLRAISVFIKDW. The Extracellular segment spans residues 209–223; it reads ILYAEQDSSHCFVST. Residues 224 to 249 traverse the membrane as a helical segment; it reads VECKAVMVFFHYCVVSNYFWLFIEGL. Cys-226 and Cys-296 form a disulfide bridge. Residues 250–267 lie on the Cytoplasmic side of the membrane; sequence YLFTLLVETFFPERRYFY. A helical transmembrane segment spans residues 268–290; sequence WYTIIGWGTPTVCVTVWAVLRLY. At 291–302 the chain is on the extracellular side; that stretch reads FDDAGCWDMNDS. A helical transmembrane segment spans residues 303 to 329; that stretch reads TALWWVIKGPVVGSIMVNFVLFIGIII. The Cytoplasmic segment spans residues 330–347; it reads ILVQKLQSPDMGGNESSI. The helical transmembrane segment at 348–402 threads the bilayer; the sequence is YFSCVQKCYCKPQRAQQHSCKMSELSTITLRLARSTLLLIPLFGIHYTVFAFSPE. Over 403 to 407 the chain is Extracellular; that stretch reads NVSKR. The helical transmembrane segment at 408–431 threads the bilayer; it reads ERLVFELGLGSFQGFVVAVLYCFL. At 432 to 496 the chain is on the cytoplasmic side; sequence NGEVQAEIKR…SSLPADNLAT (65 aa). Phosphoserine is present on residues Ser-462 and Ser-475.

This sequence belongs to the G-protein coupled receptor 2 family. Interacts with maxadilan, a vasodilator peptide from Lutzomyia longipalpis saliva; the interaction results in ADCYAP1R1 activation.

It is found in the cell membrane. In terms of biological role, g protein-coupled receptor activated by the neuropeptide pituitary adenylate cyclase-activating polypeptide (ADCYAP1/PACAP). Binds both PACAP27 and PACAP38 bioactive peptides. Ligand binding causes a conformation change that triggers signaling via guanine nucleotide-binding proteins (G proteins) and modulates the activity of downstream effectors. Activates cAMP-dependent pathway. May regulate the release of adrenocorticotropin, luteinizing hormone, growth hormone, prolactin, epinephrine, and catecholamine. May play a role in spermatogenesis and sperm motility. Causes smooth muscle relaxation and secretion in the gastrointestinal tract. This is Pituitary adenylate cyclase-activating polypeptide type I receptor from Mus musculus (Mouse).